A 363-amino-acid chain; its full sequence is Carbamoyl phosphate synthase small chain (363 aa).

CPSase stretches follow at residues 1-168 (MTKR…ASPG) and 1-172 (MTKR…DGKR). 3 residues coordinate L-glutamine: serine 46, glycine 220, and glycine 222. In terms of domain architecture, Glutamine amidotransferase type-1 spans 172–359 (RVVLVDYGVK…MEMMNVKEEG (188 aa)). Cysteine 247 (nucleophile) is an active-site residue. Leucine 248, glutamine 251, asparagine 289, glycine 291, and tyrosine 292 together coordinate L-glutamine. Residues histidine 332 and glutamate 334 contribute to the active site.

It belongs to the CarA family. In terms of assembly, composed of two chains; the small (or glutamine) chain promotes the hydrolysis of glutamine to ammonia, which is used by the large (or ammonia) chain to synthesize carbamoyl phosphate. Tetramer of heterodimers (alpha,beta)4.

The enzyme catalyses hydrogencarbonate + L-glutamine + 2 ATP + H2O = carbamoyl phosphate + L-glutamate + 2 ADP + phosphate + 2 H(+). It carries out the reaction L-glutamine + H2O = L-glutamate + NH4(+). It functions in the pathway amino-acid biosynthesis; L-arginine biosynthesis; carbamoyl phosphate from bicarbonate: step 1/1. It participates in pyrimidine metabolism; UMP biosynthesis via de novo pathway; (S)-dihydroorotate from bicarbonate: step 1/3. Functionally, small subunit of the glutamine-dependent carbamoyl phosphate synthetase (CPSase). CPSase catalyzes the formation of carbamoyl phosphate from the ammonia moiety of glutamine, carbonate, and phosphate donated by ATP, constituting the first step of 2 biosynthetic pathways, one leading to arginine and/or urea and the other to pyrimidine nucleotides. The small subunit (glutamine amidotransferase) binds and cleaves glutamine to supply the large subunit with the substrate ammonia. The protein is Carbamoyl phosphate synthase small chain of Listeria innocua serovar 6a (strain ATCC BAA-680 / CLIP 11262).